Consider the following 300-residue polypeptide: Ribosomal protein L11 methyltransferase (300 aa).

The S-adenosyl-L-methionine site is built by T152, G173, D195, and N234.

Belongs to the methyltransferase superfamily. PrmA family.

Its subcellular location is the cytoplasm. It carries out the reaction L-lysyl-[protein] + 3 S-adenosyl-L-methionine = N(6),N(6),N(6)-trimethyl-L-lysyl-[protein] + 3 S-adenosyl-L-homocysteine + 3 H(+). Functionally, methylates ribosomal protein L11. The chain is Ribosomal protein L11 methyltransferase from Burkholderia orbicola (strain MC0-3).